The sequence spans 149 residues: Transcriptional regulator MraZ (149 aa).

2 consecutive SpoVT-AbrB domains span residues 7 to 54 (KYVN…GISH) and 83 to 126 (AVQL…QPQN).

This sequence belongs to the MraZ family. As to quaternary structure, forms oligomers.

The protein localises to the cytoplasm. It is found in the nucleoid. In Rickettsia peacockii (strain Rustic), this protein is Transcriptional regulator MraZ.